The following is a 140-amino-acid chain: Histone H2B (140 aa).

Residues 1-10 (MPPKAAEKKP) are compositionally biased toward basic and acidic residues. Residues 1 to 48 (MPPKAAEKKPTTGGKAPAGKAPAEKKEAGKKTAAAASGDKKKRGKTRK) form a disordered region. N6-acetyllysine; alternate is present on residues Lys8 and Lys9. Residues Lys8 and Lys9 each participate in a glycyl lysine isopeptide (Lys-Gly) (interchain with G-Cter in SUMO); alternate cross-link. Residues 11 to 21 (TTGGKAPAGKA) show a composition bias toward low complexity. At Lys15 the chain carries N6-acetyllysine. Lys25 carries the post-translational modification N6-acetyllysine; alternate. A Glycyl lysine isopeptide (Lys-Gly) (interchain with G-Cter in SUMO); alternate cross-link involves residue Lys25. Residue Lys26 forms a Glycyl lysine isopeptide (Lys-Gly) (interchain with G-Cter in SUMO) linkage. A Glycyl lysine isopeptide (Lys-Gly) (interchain with G-Cter in ubiquitin) cross-link involves residue Lys134.

This sequence belongs to the histone H2B family. As to quaternary structure, the nucleosome is a histone octamer containing two molecules each of H2A, H2B, H3 and H4 assembled in one H3-H4 heterotetramer and two H2A-H2B heterodimers. The octamer wraps approximately 147 bp of DNA. Post-translationally, monoubiquitinated by the ubc2-bre1 complex to form H2BK123ub1. H2BK123ub1 gives a specific tag for epigenetic transcriptional activation and is also prerequisite for H3K4me and H3K79me formation. H2BK123ub1 also modulates the formation of double-strand breaks during meiosis and is a prerequisite for DNA-damage checkpoint activation. Acetylated by gcn5 to form H2BK11ac and H2BK16ac. H2BK16ac can also be formed by esa1. Acetylation of N-terminal lysines and particularly formation of H2BK11acK16ac has a positive effect on transcription. In terms of processing, sumoylation to form H2BK6su or H2BK7su, and probably also H2BK16su or H2BK17su, occurs preferentially near the telomeres and represses gene transcription.

It localises to the nucleus. The protein localises to the chromosome. Its function is as follows. Core component of nucleosome. Nucleosomes wrap and compact DNA into chromatin, limiting DNA accessibility to the cellular machineries which require DNA as a template. Histones thereby play a central role in transcription regulation, DNA repair, DNA replication and chromosomal stability. DNA accessibility is regulated via a complex set of post-translational modifications of histones, also called histone code, and nucleosome remodeling. This chain is Histone H2B (htb1), found in Aspergillus terreus (strain NIH 2624 / FGSC A1156).